Here is an 85-residue protein sequence, read N- to C-terminus: U4-theraphotoxin-Hhn1a (85 aa).

The first 22 residues, 1–22, serve as a signal peptide directing secretion; it reads MKVTLIAILTCAAVLVLHTTAA. Residues 23–48 constitute a propeptide that is removed on maturation; it reads EELEAEGQLMEVGMPDTELAAVDEER. Intrachain disulfides connect Cys52/Cys66, Cys56/Cys77, and Cys71/Cys82.

The protein belongs to the neurotoxin 12 (Hwtx-2) family. 02 (Hwtx-2) subfamily. As to quaternary structure, monomer. As to expression, expressed by the venom gland.

The protein resides in the secreted. Neurotoxin active on both insects and mammals. This Cyriopagopus hainanus (Chinese bird spider) protein is U4-theraphotoxin-Hhn1a.